The sequence spans 158 residues: MSRRHSAVKREVLPDPKFGDVVISRFMNVLMYDGKKSVAESIVYGALDSLKKRGGQNADPVRLFHEALDNVKPAIEVRSRRVGGATYQVPVEVRSERRQALAIRWIIESARKRGEHTMEDRLSNELLDAVNNRGAAVKKREDTHRMAEANKAFSHYRW.

Belongs to the universal ribosomal protein uS7 family. As to quaternary structure, part of the 30S ribosomal subunit. Contacts proteins S9 and S11.

In terms of biological role, one of the primary rRNA binding proteins, it binds directly to 16S rRNA where it nucleates assembly of the head domain of the 30S subunit. Is located at the subunit interface close to the decoding center, probably blocks exit of the E-site tRNA. This Acidiphilium cryptum (strain JF-5) protein is Small ribosomal subunit protein uS7.